Reading from the N-terminus, the 498-residue chain is MGRAIGFDREKYIELQSEHINARRKEIGGKLYLEMGGKLFDDMHASRVLPGFTPDNKIAMLERIKDDVEILVCINAKDIERQKMRGDLGILYEDDVLRLVDVFRDRGFLVNNIVMTQLEDGNSQAEAFIERLERLGLTVARHRIIPGYPANIDLIVSEDGLGKNDYVETTRDLVVVTAPGPGSGKLATALSQVYHENLRGVPAGYAKFETFPIWNLPLDHPVNLAYEAATVDLNDANVIDHFHLSAHGESTVNYNRDVEAFPLLKSLLERLTGTVPYQSPTDMGVNMVGFCITDDEVCREASQQEIIRRYFKTLVEEARNGLDTTQSERAAVVMAKAGIKSTDRPVVLPARQKAEETQGPAAALQLHDGTIITGRTSPLLGCSAAALLNALKHLAGIDDELHLLSPESIEPIQTLKTKHLGSQNPRLHTDEVLIALSVSAAKDENARRALDALKELQGCDVHTTTILGSVDEGIFRNLGVLVTSDPVFARKSALYQKR.

The protein belongs to the UPF0371 family.

This chain is UPF0371 protein cauri_2449, found in Corynebacterium aurimucosum (strain ATCC 700975 / DSM 44827 / CIP 107346 / CN-1) (Corynebacterium nigricans).